A 261-amino-acid polypeptide reads, in one-letter code: Malonyl-[acyl-carrier protein] O-methyltransferase (261 aa).

Belongs to the methyltransferase superfamily.

The catalysed reaction is malonyl-[ACP] + S-adenosyl-L-methionine = malonyl-[ACP] methyl ester + S-adenosyl-L-homocysteine. It functions in the pathway cofactor biosynthesis; biotin biosynthesis. Converts the free carboxyl group of a malonyl-thioester to its methyl ester by transfer of a methyl group from S-adenosyl-L-methionine (SAM). It allows to synthesize pimeloyl-ACP via the fatty acid synthetic pathway. The protein is Malonyl-[acyl-carrier protein] O-methyltransferase of Bacteroides thetaiotaomicron (strain ATCC 29148 / DSM 2079 / JCM 5827 / CCUG 10774 / NCTC 10582 / VPI-5482 / E50).